The chain runs to 507 residues: ATP synthase subunit alpha, chloroplastic (507 aa).

An ATP-binding site is contributed by 170 to 177; sequence GDRQTGKT.

This sequence belongs to the ATPase alpha/beta chains family. F-type ATPases have 2 components, CF(1) - the catalytic core - and CF(0) - the membrane proton channel. CF(1) has five subunits: alpha(3), beta(3), gamma(1), delta(1), epsilon(1). CF(0) has four main subunits: a, b, b' and c.

It is found in the plastid. The protein resides in the chloroplast thylakoid membrane. It catalyses the reaction ATP + H2O + 4 H(+)(in) = ADP + phosphate + 5 H(+)(out). Functionally, produces ATP from ADP in the presence of a proton gradient across the membrane. The alpha chain is a regulatory subunit. This chain is ATP synthase subunit alpha, chloroplastic, found in Nicotiana tabacum (Common tobacco).